A 323-amino-acid polypeptide reads, in one-letter code: Methionyl-tRNA formyltransferase (323 aa).

113–116 (SLLP) lines the (6S)-5,6,7,8-tetrahydrofolate pocket.

Belongs to the Fmt family.

The catalysed reaction is L-methionyl-tRNA(fMet) + (6R)-10-formyltetrahydrofolate = N-formyl-L-methionyl-tRNA(fMet) + (6S)-5,6,7,8-tetrahydrofolate + H(+). Attaches a formyl group to the free amino group of methionyl-tRNA(fMet). The formyl group appears to play a dual role in the initiator identity of N-formylmethionyl-tRNA by promoting its recognition by IF2 and preventing the misappropriation of this tRNA by the elongation apparatus. The sequence is that of Methionyl-tRNA formyltransferase from Porphyromonas gingivalis (strain ATCC BAA-308 / W83).